We begin with the raw amino-acid sequence, 328 residues long: UPF0324 membrane protein AF_1621 (328 aa).

A run of 11 helical transmembrane segments spans residues 21-39 (LQML…IINL), 43-60 (ALEP…AGNL), 73-95 (YVPF…PYLG), 101-123 (IVAA…SSRL), 130-152 (SILL…SPLI), 162-184 (AIMI…AHYA), 191-213 (FAVL…QLFG), 223-240 (GIRI…SIIY), 245-267 (FYVP…YLPG), 271-293 (QALR…YTVN), and 305-327 (LFAS…GSGA).

It belongs to the UPF0324 family.

It is found in the cell membrane. The chain is UPF0324 membrane protein AF_1621 from Archaeoglobus fulgidus (strain ATCC 49558 / DSM 4304 / JCM 9628 / NBRC 100126 / VC-16).